Here is a 37-residue protein sequence, read N- to C-terminus: MYGYSGYGYGFGCGTNTFVLIVVLFILLIIVGAAFIC.

Residues 17 to 37 form a helical membrane-spanning segment; it reads TFVLIVVLFILLIIVGAAFIC.

This sequence belongs to the SscA family.

It is found in the membrane. This is an uncharacterized protein from Bacillus subtilis (strain 168).